The primary structure comprises 496 residues: Lysine--tRNA ligase (496 aa).

Mg(2+) is bound by residues Glu-407 and Glu-414.

This sequence belongs to the class-II aminoacyl-tRNA synthetase family. In terms of assembly, homodimer. Mg(2+) is required as a cofactor.

The protein localises to the cytoplasm. It catalyses the reaction tRNA(Lys) + L-lysine + ATP = L-lysyl-tRNA(Lys) + AMP + diphosphate. This is Lysine--tRNA ligase from Staphylococcus haemolyticus (strain JCSC1435).